A 503-amino-acid chain; its full sequence is SH2 domain-containing adapter protein B (503 aa).

Disordered regions lie at residues 1 to 49 (MAKW…QACS) and 61 to 81 (CFSA…DLIR). Serine 101 carries the post-translational modification Phosphoserine. The segment covering 147–157 (AAASSSSSSGS) has biased composition (low complexity). The interval 147–180 (AAASSSSSSGSPHLYRSSSERRPTTPAEVRYISP) is disordered. Residue lysine 186 forms a Glycyl lysine isopeptide (Lys-Gly) (interchain with G-Cter in SUMO2) linkage. 3 disordered regions span residues 225–262 (ETGA…SAGY), 292–333 (DTPY…YDQP), and 345–381 (AAQF…IKHG). A compositionally biased stretch (basic and acidic residues) spans 244–256 (FDAKSDLKSKAGK). A phosphoserine mark is found at serine 301 and serine 311. Over residues 301–311 (SVDSDSESTVS) the composition is skewed to polar residues. The span at 313–328 (RLRESKLPQDDDRPAD) shows a compositional bias: basic and acidic residues. Serine 382 is modified (phosphoserine). The 95-residue stretch at 404–498 (WYHGAISRSD…AEHLSLLYPV (95 aa)) folds into the SH2 domain.

As to quaternary structure, interacts with phosphorylated 'Tyr-720' of the ligand-activated receptor PDGFRA via its SH2 domain. Interacts with the ligand-activated receptors PDGFRB, FGFR1, KDR/VEGFR2, IL2RB and IL2RG. Interacts with EPS8 and V-SRC. Interacts with GRB2 and GRAP. Interacts with CD3Z. Interacts with tyrosine-phosphorylated LAT upon T-cell antigen receptor activation. Interacts with PLCG1. Interacts with ZAP70, LCP2/SLP-76, VAV1 and GRAP2. Interacts with JAK1 and JAK3. Interacts with PTK2/FAK1. Interacts with CRK/CrKII. Interacts with IRS2. Interacts with PTPN11. In terms of processing, phosphorylated upon PDGFRA, PDGFRB, TCR, IL2 receptor, FGFR1 or VEGFR2 activation. In terms of tissue distribution, expressed in heart, liver, brain and kidney (at protein level).

The protein localises to the cytoplasm. It localises to the cell membrane. Functionally, adapter protein which regulates several signal transduction cascades by linking activated receptors to downstream signaling components. May play a role in angiogenesis by regulating FGFR1, VEGFR2 and PDGFR signaling. May also play a role in T-cell antigen receptor/TCR signaling, interleukin-2 signaling, apoptosis and neuronal cells differentiation by mediating basic-FGF and NGF-induced signaling cascades. May also regulate IRS1 and IRS2 signaling in insulin-producing cells. This chain is SH2 domain-containing adapter protein B (Shb), found in Mus musculus (Mouse).